The following is a 226-amino-acid chain: ATP synthase subunit a (226 aa).

A run of 5 helical transmembrane segments spans residues 17 to 37 (FLFVSHMFLAALLTLIVAKLA), 78 to 98 (LVATLGLFIFFANLMEIIPGF), 104 to 124 (NINFTLALALIVFIYYNFEGI), 175 to 195 (LFVWVLLMLAPWIVPLPGFAL), and 201 to 221 (FLQTFIFMILTYVYLAGAVLL).

The protein belongs to the ATPase A chain family. F-type ATPases have 2 components, CF(1) - the catalytic core - and CF(0) - the membrane proton channel. CF(1) has five subunits: alpha(3), beta(3), gamma(1), delta(1), epsilon(1). CF(0) has three main subunits: a(1), b(2) and c(9-12). The alpha and beta chains form an alternating ring which encloses part of the gamma chain. CF(1) is attached to CF(0) by a central stalk formed by the gamma and epsilon chains, while a peripheral stalk is formed by the delta and b chains.

It is found in the cell inner membrane. Functionally, key component of the proton channel; it plays a direct role in the translocation of protons across the membrane. The polypeptide is ATP synthase subunit a (Nitratiruptor sp. (strain SB155-2)).